We begin with the raw amino-acid sequence, 142 residues long: Large ribosomal subunit protein uL13 (142 aa).

Belongs to the universal ribosomal protein uL13 family. As to quaternary structure, part of the 50S ribosomal subunit.

Its function is as follows. This protein is one of the early assembly proteins of the 50S ribosomal subunit, although it is not seen to bind rRNA by itself. It is important during the early stages of 50S assembly. This Xanthomonas oryzae pv. oryzae (strain MAFF 311018) protein is Large ribosomal subunit protein uL13.